Consider the following 208-residue polypeptide: Uracil phosphoribosyltransferase (208 aa).

5-phospho-alpha-D-ribose 1-diphosphate is bound by residues R78, R103, and 130–138 (DPMLATGGS). Residues I193 and 198–200 (GDA) contribute to the uracil site. Residue D199 coordinates 5-phospho-alpha-D-ribose 1-diphosphate.

It belongs to the UPRTase family. The cofactor is Mg(2+).

The enzyme catalyses UMP + diphosphate = 5-phospho-alpha-D-ribose 1-diphosphate + uracil. The protein operates within pyrimidine metabolism; UMP biosynthesis via salvage pathway; UMP from uracil: step 1/1. Its activity is regulated as follows. Allosterically activated by GTP. In terms of biological role, catalyzes the conversion of uracil and 5-phospho-alpha-D-ribose 1-diphosphate (PRPP) to UMP and diphosphate. In Shewanella baltica (strain OS223), this protein is Uracil phosphoribosyltransferase.